Here is a 226-residue protein sequence, read N- to C-terminus: uncharacterized protein (226 aa).

The helical transmembrane segment at 203–225 threads the bilayer; it reads FGISDIYTSTLSFGLIISLFYLL.

The protein resides in the membrane. This is an uncharacterized protein from Acanthamoeba polyphaga (Amoeba).